A 186-amino-acid chain; its full sequence is ATP-dependent protease subunit HslV (186 aa).

Thr14 is a catalytic residue. The Na(+) site is built by Ala168, Cys171, and Thr174.

Belongs to the peptidase T1B family. HslV subfamily. A double ring-shaped homohexamer of HslV is capped on each side by a ring-shaped HslU homohexamer. The assembly of the HslU/HslV complex is dependent on binding of ATP.

The protein resides in the cytoplasm. The catalysed reaction is ATP-dependent cleavage of peptide bonds with broad specificity.. Its activity is regulated as follows. Allosterically activated by HslU binding. Its function is as follows. Protease subunit of a proteasome-like degradation complex believed to be a general protein degrading machinery. This is ATP-dependent protease subunit HslV from Bradyrhizobium sp. (strain ORS 278).